A 567-amino-acid polypeptide reads, in one-letter code: MNILNLKIIMFLLISNTIVVGGAWATSTCPDWPATRIAVEINALEQQLNKWSAAYHQQGHSPVTDDIYDQLQDKLRVWQSCRGLPDKTESQPIPGKGQFLHPVAHTGLKKLKDETALTRWMAGRKNLWVQPKVDGVAVTLVYHGGKLVQLLSRGNGVKGQNWTEKAPFISAIPQYIANAPALLTLQGELFLLMDGHQQAKSGGVNARSTVAGALMRKSPSPLLAQVGVFIWAWPDGPTTMKEKVALLQVMGFPFTAKYSEPVMSHLDVVQWRQFWFQAPLPFVTDGVVVRQEEEPAGRYWQATPGQWSMAWKYPPLQHIAEVKDIHFTLGRTGKGTVVLEVLPIKIDDKWIRRVNIGSVTRWKQWDIAPGDHITLALAGHGIPRLDNVVWRVHQRNTITAPNWDKFHQLSCFQRLPHGCEPQFLSRLIWLSGPGGLDIGGIGGGFWQELIHHELINDLVGWLLLTPEQIASIPGIGNARAEKIYQQFQRAKQQPFSRWLLALGFPQVVSVDAQWQVVLRRSLSEWATMAGIGQMRAKQIKHFLDHPDVQALADFLSTQKVVGFELTE.

Lys-132 (N6-AMP-lysine intermediate) is an active-site residue.

It belongs to the NAD-dependent DNA ligase family. LigB subfamily.

It catalyses the reaction NAD(+) + (deoxyribonucleotide)n-3'-hydroxyl + 5'-phospho-(deoxyribonucleotide)m = (deoxyribonucleotide)n+m + AMP + beta-nicotinamide D-nucleotide.. Its function is as follows. Catalyzes the formation of phosphodiester linkages between 5'-phosphoryl and 3'-hydroxyl groups in double-stranded DNA using NAD as a coenzyme and as the energy source for the reaction. The chain is DNA ligase B from Yersinia pestis.